The following is a 267-amino-acid chain: Phosphate import ATP-binding protein PstB 2 (267 aa).

In terms of domain architecture, ABC transporter spans 21-262 (LSTKDVHVYY…AKLQSTNDYV (242 aa)). 53 to 60 (GPSGSGKS) serves as a coordination point for ATP.

This sequence belongs to the ABC transporter superfamily. Phosphate importer (TC 3.A.1.7) family. As to quaternary structure, the complex is composed of two ATP-binding proteins (PstB), two transmembrane proteins (PstC and PstA) and a solute-binding protein (PstS).

The protein localises to the cell membrane. It carries out the reaction phosphate(out) + ATP + H2O = ADP + 2 phosphate(in) + H(+). Functionally, part of the ABC transporter complex PstSACB involved in phosphate import. Responsible for energy coupling to the transport system. The chain is Phosphate import ATP-binding protein PstB 2 from Streptococcus pneumoniae (strain ATCC BAA-255 / R6).